The following is a 201-amino-acid chain: Ubiquitin-conjugating enzyme E2 E2 (201 aa).

Residues 1-10 (MSTEAQRVDD) show a composition bias toward basic and acidic residues. The disordered stretch occupies residues 1–55 (MSTEAQRVDDSPSTSGGSSDGDQRESVQQEPDREQVQPKKKEGKISSKTAAKLST). Position 2 is an N-acetylserine (serine 2). A phosphoserine mark is found at serine 11, serine 15, serine 18, and serine 19. A compositionally biased stretch (basic and acidic residues) spans 21–45 (GDQRESVQQEPDREQVQPKKKEGKI). Positions 46–55 (SSKTAAKLST) are enriched in low complexity. One can recognise a UBC core domain in the interval 55-201 (TSAKRIQKEL…ARQWTKRYAT (147 aa)). Cysteine 139 functions as the Glycyl thioester intermediate in the catalytic mechanism.

Belongs to the ubiquitin-conjugating enzyme family. In terms of processing, autoubiquitinated.

It carries out the reaction S-ubiquitinyl-[E1 ubiquitin-activating enzyme]-L-cysteine + [E2 ubiquitin-conjugating enzyme]-L-cysteine = [E1 ubiquitin-activating enzyme]-L-cysteine + S-ubiquitinyl-[E2 ubiquitin-conjugating enzyme]-L-cysteine.. It functions in the pathway protein modification; protein ubiquitination. Functionally, accepts ubiquitin from the E1 complex and catalyzes its covalent attachment to other proteins. In vitro catalyzes 'Lys-11'- and 'Lys-48'-, as well as 'Lys-63'-linked polyubiquitination. Catalyzes the ISGylation of influenza A virus NS1 protein. This Mus musculus (Mouse) protein is Ubiquitin-conjugating enzyme E2 E2 (Ube2e2).